A 130-amino-acid chain; its full sequence is Small ribosomal subunit protein uS9 (130 aa).

Positions Thr-105–Arg-130 are disordered. Basic residues predominate over residues Lys-111–Arg-130.

The protein belongs to the universal ribosomal protein uS9 family.

The chain is Small ribosomal subunit protein uS9 from Listeria welshimeri serovar 6b (strain ATCC 35897 / DSM 20650 / CCUG 15529 / CIP 8149 / NCTC 11857 / SLCC 5334 / V8).